The sequence spans 66 residues: MAFLKKSLFLVLFLGLVSLSICEEEKRETEEEEHDQEEDDKSEEKRFLSLIPHIVSGVASIAKHLG.

A signal peptide spans 1 to 22; that stretch reads MAFLKKSLFLVLFLGLVSLSIC. Residues 23-46 constitute a propeptide that is removed on maturation; the sequence is EEEKRETEEEEHDQEEDDKSEEKR. A disordered region spans residues 25–44; that stretch reads EKRETEEEEHDQEEDDKSEE. Over residues 30–41 the composition is skewed to acidic residues; it reads EEEEHDQEEDDK. Leucine amide is present on L65.

Belongs to the frog skin active peptide (FSAP) family. Phylloseptin subfamily. As to expression, expressed by the skin glands.

It is found in the secreted. Its subcellular location is the target cell membrane. Its function is as follows. Antimicrobial peptide with high activity against Gram-positive bacteria, low activity against Gram-negative bacteria, and moderate activity against fungi. Acts by causing bacterial membrane disruption inducing leakage of the intracellular content followed by cell death. It adopts an alpha-helical amphipathic structure in membrane environments. Also shows highly potent antiparasitic activity against Leishmania species. Shows moderate hemolytic activity on human erythrocytes. Is also active on human monocytes. This is Phylloseptin-S6 from Phyllomedusa sauvagei (Sauvage's leaf frog).